A 204-amino-acid chain; its full sequence is Holliday junction branch migration complex subunit RuvA (204 aa).

The tract at residues 1–64 (MIGRLRGIIL…EDAQLLYGFN (64 aa)) is domain I. Residues 65-142 (NKQERALFRE…KGLNGDLFNN (78 aa)) form a domain II region. Residues 143–155 (TGDISLPTASPQT) are flexible linker. Residues 156–204 (SDADIEAEAASALVALGYKPQEASRLVSKIAKPGADCETLIRDALRAAL) are domain III.

It belongs to the RuvA family. In terms of assembly, homotetramer. Forms an RuvA(8)-RuvB(12)-Holliday junction (HJ) complex. HJ DNA is sandwiched between 2 RuvA tetramers; dsDNA enters through RuvA and exits via RuvB. An RuvB hexamer assembles on each DNA strand where it exits the tetramer. Each RuvB hexamer is contacted by two RuvA subunits (via domain III) on 2 adjacent RuvB subunits; this complex drives branch migration. In the full resolvosome a probable DNA-RuvA(4)-RuvB(12)-RuvC(2) complex forms which resolves the HJ.

The protein localises to the cytoplasm. The RuvA-RuvB-RuvC complex processes Holliday junction (HJ) DNA during genetic recombination and DNA repair, while the RuvA-RuvB complex plays an important role in the rescue of blocked DNA replication forks via replication fork reversal (RFR). RuvA specifically binds to HJ cruciform DNA, conferring on it an open structure. The RuvB hexamer acts as an ATP-dependent pump, pulling dsDNA into and through the RuvAB complex. HJ branch migration allows RuvC to scan DNA until it finds its consensus sequence, where it cleaves and resolves the cruciform DNA. The polypeptide is Holliday junction branch migration complex subunit RuvA (Yersinia pseudotuberculosis serotype O:1b (strain IP 31758)).